Consider the following 302-residue polypeptide: ATP synthase subunit a (302 aa).

A run of 7 helical transmembrane segments spans residues 61 to 81 (VDSLAWSGGLGIIMCLLFWLG), 119 to 139 (IAPLSLVIFCWVFLMNLMDLI), 148 to 168 (FEWVMVTFFGWSAHEAYFKIV), 172 to 192 (DPNITLGMSFSVMFLIIFLTI), 214 to 234 (PVVKALLIPINLLLETIALLA), 252 to 272 (FVFILLAAMMGTWQFIGAWPW), and 273 to 293 (AVFHILVITLQAFIFMVLTIV).

The protein belongs to the ATPase A chain family. As to quaternary structure, F-type ATPases have 2 components, CF(1) - the catalytic core - and CF(0) - the membrane proton channel. CF(1) has five subunits: alpha(3), beta(3), gamma(1), delta(1), epsilon(1). CF(0) has three main subunits: a(1), b(2) and c(9-12). The alpha and beta chains form an alternating ring which encloses part of the gamma chain. CF(1) is attached to CF(0) by a central stalk formed by the gamma and epsilon chains, while a peripheral stalk is formed by the delta and b chains.

The protein localises to the cell inner membrane. In terms of biological role, key component of the proton channel; it plays a direct role in the translocation of protons across the membrane. The protein is ATP synthase subunit a of Alcanivorax borkumensis (strain ATCC 700651 / DSM 11573 / NCIMB 13689 / SK2).